Here is a 238-residue protein sequence, read N- to C-terminus: Ribosomal RNA small subunit methyltransferase G (238 aa).

Residues glycine 75, leucine 80, 126-127, and arginine 142 contribute to the S-adenosyl-L-methionine site; that span reads AE.

It belongs to the methyltransferase superfamily. RNA methyltransferase RsmG family.

The protein localises to the cytoplasm. Specifically methylates the N7 position of guanine in position 518 of 16S rRNA. In Streptomyces avermitilis (strain ATCC 31267 / DSM 46492 / JCM 5070 / NBRC 14893 / NCIMB 12804 / NRRL 8165 / MA-4680), this protein is Ribosomal RNA small subunit methyltransferase G.